The chain runs to 169 residues: Secretory-abundant heat soluble protein 1 (169 aa).

The signal sequence occupies residues M1 to G19. The segment at E31–P60 is SAHS-c1. The segment at W75–E103 is SAHS-c2. N109 is a glycosylation site (N-linked (GlcNAc...) asparagine). The interval K116 to K165 is SAHS-c3.

This sequence belongs to the Secretory-abundant heat soluble protein (SAHS) family.

Its subcellular location is the secreted. Functionally, secreted heat soluble protein acting as a molecular shield in water-deficient condition. Tardigrade-specific intrinsically disordered proteins (TDPs) are essential for desiccation tolerance by forming non-crystalline amorphous solids upon desiccation, and this vitrified state mirrors their protective capabilities. This is Secretory-abundant heat soluble protein 1 from Ramazzottius varieornatus (Water bear).